We begin with the raw amino-acid sequence, 236 residues long: Small ribosomal subunit protein uS2c (236 aa).

Belongs to the universal ribosomal protein uS2 family.

The protein localises to the plastid. Its subcellular location is the chloroplast. The chain is Small ribosomal subunit protein uS2c (rps2) from Phaseolus vulgaris (Kidney bean).